Consider the following 416-residue polypeptide: 3-oxoacyl-[acyl-carrier-protein] synthase 1 (416 aa).

Positions 11-415 constitute a Ketosynthase family 3 (KS3) domain; the sequence is FPSVVVTAVT…GHNVALAFGR (405 aa). Active-site for beta-ketoacyl synthase activity residues include cysteine 171, histidine 311, and histidine 345. The substrate site is built by histidine 311 and histidine 345.

The protein belongs to the thiolase-like superfamily. Beta-ketoacyl-ACP synthases family.

Its subcellular location is the cytoplasm. The enzyme catalyses an ultra-long-chain mono-unsaturated fatty acyl-[ACP] + malonyl-[ACP] + H(+) = a 3-oxo-ultra-long-chain mono-unsaturated fatty acyl-[ACP] + holo-[ACP] + CO2. The protein operates within lipid metabolism; mycolic acid biosynthesis. Part of the mycobacterial fatty acid elongation system FAS-II, which is involved in mycolic acid biosynthesis. Catalyzes the elongation of long chain acyl-ACP substrates by the addition of two carbons from malonyl-ACP to an acyl acceptor. Involved in the initial extension of the mycolate chain and forms monounsaturated fatty acids that averaged 40 carbons in length. This Mycobacterium leprae (strain TN) protein is 3-oxoacyl-[acyl-carrier-protein] synthase 1 (kasA).